We begin with the raw amino-acid sequence, 171 residues long: Sorcin (171 aa).

EF-hand domains lie at 3 to 38 (MDTN…GLGT), 40 to 69 (LNIR…LGLF), 70 to 105 (KYVQ…FGYH), and 106 to 140 (LSPQ…LQTL). D16, D18, S20, S22, E27, D53, D55, N57, T59, E64, D83, D85, S87, S89, and E94 together coordinate Ca(2+).

The protein localises to the cytoplasm. Its function is as follows. Calcium-binding protein. In Schistosoma japonicum (Blood fluke), this protein is Sorcin.